Reading from the N-terminus, the 254-residue chain is Claudin-16 (254 aa).

The Cytoplasmic portion of the chain corresponds to 1 to 22 (MGPGLAASHVSFPDSLLAKMRD). The chain crosses the membrane as a helical span at residues 23–43 (LLQYVACFFAFFSAGFLVVAT). Topologically, residues 44–98 (WTDCWMVNADDSLEVSTKCRGLWWECVTNAFDGIRTCDEYDSILAEHSLKLVVTR) are extracellular. A helical membrane pass occupies residues 99-119 (ALMITADILAGFGFITLLLGL). The Cytoplasmic portion of the chain corresponds to 120-134 (DCVKFLPDEPYIKVR). A helical membrane pass occupies residues 135–155 (ISFVAGTTLLIAGAPGIIGSV). Residues 156 to 188 (WYAVDVYVERSSLVLHNIFLGIQYKFGWSCWLG) lie on the Extracellular side of the membrane. Residues 189–209 (MAGSLGCFLAGAILTCCLYLF) traverse the membrane as a helical segment. At 210–254 (KDVGPERSYPYSTRKAYSTTAVSMPRSHAIPRTQTAKMYAVDTRV) the chain is on the cytoplasmic side. An Interaction with TJP1 motif is present at residues 252 to 254 (TRV).

It belongs to the claudin family. Can form heteropolymeric tight junction strands with other claudins. Interacts with CLDN19. Interacts (via PDZ-binding motif TRV) with TJP1 (via PDZ domain). Cannot form tight junction strands on its own. As to expression, expressed preferentially in kidney.

It localises to the cell junction. The protein resides in the tight junction. The protein localises to the cell membrane. It carries out the reaction Mg(2+)(in) = Mg(2+)(out). It catalyses the reaction Ca(2+)(in) = Ca(2+)(out). The enzyme catalyses Na(+)(in) = Na(+)(out). The catalysed reaction is K(+)(in) = K(+)(out). It carries out the reaction Rb(+)(in) = Rb(+)(out). It catalyses the reaction Cs(+)(in) = Cs(+)(out). The enzyme catalyses Li(+)(in) = Li(+)(out). Its function is as follows. Forms paracellular channels: coassembles with CLDN19 into tight junction strands with cation-selective channels through the strands, conveying epithelial permeability in a process known as paracellular tight junction permeability. Involved in the maintenance of ion gradients along the nephron. In the thick ascending limb (TAL) of Henle's loop, facilitates sodium paracellular permeability from the interstitial compartment to the lumen, contributing to the lumen-positive transepithelial potential that drives paracellular magnesium and calcium reabsorption. In Bos taurus (Bovine), this protein is Claudin-16 (CLDN16).